The following is a 397-amino-acid chain: Lysophospholipid transporter LplT (397 aa).

The Periplasmic segment spans residues 1–17; the sequence is MSESVHTNTSLWSKGMK. Residues 18–38 traverse the membrane as a helical segment; that stretch reads AVIVAQFLSAFGDNALLFATL. The Cytoplasmic segment spans residues 39–52; the sequence is ALLKAQFYPEWSQP. The chain crosses the membrane as a helical span at residues 53–73; that stretch reads ILQMVFVGAYILFAPFVGQVA. The Periplasmic portion of the chain corresponds to 74–90; that stretch reads DSFAKGRVMMFANGLKL. The helical transmembrane segment at 91 to 111 threads the bilayer; the sequence is LGAASICFGINPFLGYTLVGV. Over 112–144 the chain is Cytoplasmic; that stretch reads GAAAYSPAKYGILGELTTGSKLVKANGLMEAST. The chain crosses the membrane as a helical span at residues 145–165; the sequence is IAAILLGSVAGGVLADWHILV. Residue A166 is a topological domain, periplasmic. Residues 167 to 187 form a helical membrane-spanning segment; that stretch reads LAACALAYGGAVVANIYIPKL. Residues 188-226 are Cytoplasmic-facing; sequence AAARPGQSWNLISMTRSFLNACTSLWRNGETRFSLVGTS. The chain crosses the membrane as a helical span at residues 227–247; the sequence is LFWGAGVTLRFLLVLWVPVAL. The Periplasmic portion of the chain corresponds to 248–256; that stretch reads GITDNATPT. A helical membrane pass occupies residues 257 to 277; sequence YLNAMVAIGIVVGAGAAAKLV. Residues 278–280 lie on the Cytoplasmic side of the membrane; the sequence is TLE. The chain crosses the membrane as a helical span at residues 281 to 301; the sequence is TVSRCMPAGILIGVVVLIFSL. Residues 302 to 304 are Periplasmic-facing; it reads QHE. A helical transmembrane segment spans residues 305 to 325; it reads LLPAYALLMLIGVLGGFFVVP. At 326–343 the chain is on the cytoplasmic side; that stretch reads LNALLQERGKKSVGAGNA. The chain crosses the membrane as a helical span at residues 344–364; the sequence is IAVQNLGENSAMLLMLGIYSL. At 365–366 the chain is on the periplasmic side; sequence AV. The chain crosses the membrane as a helical span at residues 367 to 387; sequence MVGIPVVPIGIGFGALFALAI. Residues 388-397 are Cytoplasmic-facing; it reads TALWIWQRRH.

It belongs to the major facilitator superfamily. LplT (TC 2.A.1.42) family.

Its subcellular location is the cell inner membrane. Its function is as follows. Catalyzes the facilitated diffusion of 2-acyl-glycero-3-phosphoethanolamine (2-acyl-GPE) into the cell. In Escherichia coli O6:K15:H31 (strain 536 / UPEC), this protein is Lysophospholipid transporter LplT.